A 197-amino-acid polypeptide reads, in one-letter code: Probable nicotinate-nucleotide adenylyltransferase (197 aa).

It belongs to the NadD family.

The catalysed reaction is nicotinate beta-D-ribonucleotide + ATP + H(+) = deamido-NAD(+) + diphosphate. The protein operates within cofactor biosynthesis; NAD(+) biosynthesis; deamido-NAD(+) from nicotinate D-ribonucleotide: step 1/1. In terms of biological role, catalyzes the reversible adenylation of nicotinate mononucleotide (NaMN) to nicotinic acid adenine dinucleotide (NaAD). In Leptospira borgpetersenii serovar Hardjo-bovis (strain JB197), this protein is Probable nicotinate-nucleotide adenylyltransferase.